The chain runs to 210 residues: Dephospho-CoA kinase (210 aa).

A DPCK domain is found at 4–202; that stretch reads WVGLTGGIGS…AFYSGIFASK (199 aa). 12-17 is an ATP binding site; it reads GSGKSA.

This sequence belongs to the CoaE family.

It is found in the cytoplasm. It catalyses the reaction 3'-dephospho-CoA + ATP = ADP + CoA + H(+). It functions in the pathway cofactor biosynthesis; coenzyme A biosynthesis; CoA from (R)-pantothenate: step 5/5. Its function is as follows. Catalyzes the phosphorylation of the 3'-hydroxyl group of dephosphocoenzyme A to form coenzyme A. This chain is Dephospho-CoA kinase, found in Neisseria gonorrhoeae (strain ATCC 700825 / FA 1090).